A 215-amino-acid chain; its full sequence is Cytochrome b6 (215 aa).

Residues 32 to 52 form a helical membrane-spanning segment; sequence IFYCLGGITLTCFLIQFATGF. Cysteine 35 contributes to the heme c binding site. 2 residues coordinate heme b: histidine 86 and histidine 100. Helical transmembrane passes span 90–110, 116–136, and 186–206; these read ASMM…TGGF, LTWV…VTGY, and LHTF…FLMI. The heme b site is built by histidine 187 and histidine 202.

The protein belongs to the cytochrome b family. PetB subfamily. In terms of assembly, the 4 large subunits of the cytochrome b6-f complex are cytochrome b6, subunit IV (17 kDa polypeptide, PetD), cytochrome f and the Rieske protein, while the 4 small subunits are PetG, PetL, PetM and PetN. The complex functions as a dimer. The cofactor is heme b. Heme c serves as cofactor.

Its subcellular location is the cellular thylakoid membrane. Component of the cytochrome b6-f complex, which mediates electron transfer between photosystem II (PSII) and photosystem I (PSI), cyclic electron flow around PSI, and state transitions. The chain is Cytochrome b6 from Synechococcus elongatus (strain ATCC 33912 / PCC 7942 / FACHB-805) (Anacystis nidulans R2).